The chain runs to 236 residues: Endo-1,4-beta-xylanase 3 (236 aa).

An N-terminal signal peptide occupies residues 1 to 45; the sequence is MQILTWALAALAAIPAVTAAPVETVEASSMDELVERSPNVTLVAR. N-linked (GlcNAc...) asparagine glycosylation is found at asparagine 39 and asparagine 106. The GH11 domain occupies 46-236; the sequence is GTPSSTGTHN…SSGSASMTVR (191 aa). The active-site Nucleophile is glutamate 131. Residue glutamate 223 is the Proton donor of the active site.

Belongs to the glycosyl hydrolase 11 (cellulase G) family.

It localises to the secreted. The enzyme catalyses Endohydrolysis of (1-&gt;4)-beta-D-xylosidic linkages in xylans.. The protein operates within glycan degradation; xylan degradation. Functionally, endo-1,4-beta-xylanase involved in the hydrolysis of xylan, a major structural heterogeneous polysaccharide found in plant biomass representing the second most abundant polysaccharide in the biosphere, after cellulose. This chain is Endo-1,4-beta-xylanase 3 (XYL3), found in Pyricularia grisea (Crabgrass-specific blast fungus).